Reading from the N-terminus, the 112-residue chain is Nucleoid-associated protein FTM_1023 (112 aa).

It belongs to the YbaB/EbfC family. In terms of assembly, homodimer.

Its subcellular location is the cytoplasm. The protein resides in the nucleoid. Binds to DNA and alters its conformation. May be involved in regulation of gene expression, nucleoid organization and DNA protection. The sequence is that of Nucleoid-associated protein FTM_1023 from Francisella tularensis subsp. mediasiatica (strain FSC147).